The following is a 224-amino-acid chain: Small ribosomal subunit protein uS3 (224 aa).

The KH type-2 domain occupies 39–107 (IREFLKKKPS…DVWVEIAEVK (69 aa)).

It belongs to the universal ribosomal protein uS3 family. As to quaternary structure, part of the 30S ribosomal subunit. Forms a tight complex with proteins S10 and S14.

In terms of biological role, binds the lower part of the 30S subunit head. Binds mRNA in the 70S ribosome, positioning it for translation. The polypeptide is Small ribosomal subunit protein uS3 (Chlamydia trachomatis serovar A (strain ATCC VR-571B / DSM 19440 / HAR-13)).